Consider the following 347-residue polypeptide: Phosphoribosylformylglycinamidine cyclo-ligase (347 aa).

This sequence belongs to the AIR synthase family.

The protein resides in the cytoplasm. The catalysed reaction is 2-formamido-N(1)-(5-O-phospho-beta-D-ribosyl)acetamidine + ATP = 5-amino-1-(5-phospho-beta-D-ribosyl)imidazole + ADP + phosphate + H(+). The protein operates within purine metabolism; IMP biosynthesis via de novo pathway; 5-amino-1-(5-phospho-D-ribosyl)imidazole from N(2)-formyl-N(1)-(5-phospho-D-ribosyl)glycinamide: step 2/2. This is Phosphoribosylformylglycinamidine cyclo-ligase from Yersinia pestis.